The following is an 828-amino-acid chain: Periplasmic nitrate reductase (828 aa).

The segment at residues 1-31 (MKLSRRSFMKANAVAAAAAAAGLSVPGVARA) is a signal peptide (tat-type signal). One can recognise a 4Fe-4S Mo/W bis-MGD-type domain in the interval 39 to 95 (IKWDKAPCRFCGTGCGVLVGTQQGRVVACQGDPDAPVNRGLNCIKGYFLPKIMYGKD). [4Fe-4S] cluster-binding residues include Cys-46, Cys-49, Cys-53, and Cys-81. Residues Lys-83, Gln-150, Asn-175, Cys-179, 212–219 (WGANMAEM), 243–247 (STYQH), 262–264 (QSD), Met-372, Gln-376, Asn-482, 508–509 (SD), Lys-531, Asp-558, and 718–727 (TGRVLEHWHT) each bind Mo-bis(molybdopterin guanine dinucleotide). Residue Phe-794 participates in substrate binding. Mo-bis(molybdopterin guanine dinucleotide)-binding residues include Asn-802 and Lys-819.

It belongs to the prokaryotic molybdopterin-containing oxidoreductase family. NasA/NapA/NarB subfamily. In terms of assembly, component of the periplasmic nitrate reductase NapAB complex composed of NapA and NapB. It depends on [4Fe-4S] cluster as a cofactor. Mo-bis(molybdopterin guanine dinucleotide) is required as a cofactor. Post-translationally, predicted to be exported by the Tat system. The position of the signal peptide cleavage has not been experimentally proven.

Its subcellular location is the periplasm. The catalysed reaction is 2 Fe(II)-[cytochrome] + nitrate + 2 H(+) = 2 Fe(III)-[cytochrome] + nitrite + H2O. Catalytic subunit of the periplasmic nitrate reductase complex NapAB. Receives electrons from NapB and catalyzes the reduction of nitrate to nitrite. In Escherichia coli (strain K12 / MC4100 / BW2952), this protein is Periplasmic nitrate reductase.